The primary structure comprises 109 residues: Iron-sulfur cluster assembly protein CyaY (109 aa).

Belongs to the frataxin family.

Its function is as follows. Involved in iron-sulfur (Fe-S) cluster assembly. May act as a regulator of Fe-S biogenesis. This Acidovorax ebreus (strain TPSY) (Diaphorobacter sp. (strain TPSY)) protein is Iron-sulfur cluster assembly protein CyaY.